Consider the following 670-residue polypeptide: CLK4-associating serine/arginine rich protein (670 aa).

Serine 101 bears the Phosphoserine mark. Disordered regions lie at residues 171–232 (TVAE…GMAD) and 258–670 (EKAM…HYRH). The segment covering 182-214 (PEEEESPAEEESNSDEDEVIPDIDVEVDVDELN) has biased composition (acidic residues). The segment covering 265–283 (RRSRRQRREFREKRLRGRK) has biased composition (basic residues). 2 positions are modified to phosphoserine: serine 285 and serine 294. A compositionally biased stretch (basic and acidic residues) spans 290–313 (ARRDSPTYDPYKRSPSESSSESRS). Threonine 327 is modified (phosphothreonine). Phosphoserine is present on residues serine 331 and serine 335. Residues 340–355 (AAAAAAAAASGAATGK) are compositionally biased toward low complexity. Pro residues predominate over residues 356 to 365 (PPAPPQPGGP). Over residues 378–400 (STSSSSSSASRTSSSRSRSSSSS) the composition is skewed to low complexity. Composition is skewed to basic residues over residues 411–443 (SGRHARSRSRSWSRSRSRSRRYSRSRSRGRRHS) and 481–491 (RGGRGPRHHSS). Over residues 492 to 529 (SRSSWSLSPSRSRSLTRSRSPSLSRSRSLSRSRSQSHS) the composition is skewed to low complexity. At serine 543 the chain carries Phosphoserine. Residue threonine 569 is modified to Phosphothreonine. Positions 581–643 (ALNRQFKADK…ERQYSRQSRS (63 aa)) form a coiled coil. 2 stretches are compositionally biased toward basic and acidic residues: residues 586-613 (FKADKKAAQEKMIQQEHERQEREDELRA) and 621-637 (KERERREKEREEWERQY). A compositionally biased stretch (low complexity) spans 638–647 (SRQSRSPSPR). Positions 655 to 670 (SRRRSRSRSRSPHYRH) are enriched in basic residues.

Belongs to the splicing factor SR family. Probably interacts with CLK4. In terms of processing, phosphorylated in vitro by CLK4.

It is found in the nucleus. Probably functions as an alternative splicing regulator. May regulate the mRNA splicing of genes such as CLK1. May act by regulating members of the CLK kinase family. The sequence is that of CLK4-associating serine/arginine rich protein (CLASRP) from Bos taurus (Bovine).